The primary structure comprises 147 residues: Myoglobin (147 aa).

In terms of domain architecture, Globin spans 2–141 (ADFDMVLKCW…IIADMEADYK (140 aa)). Residue H60 coordinates nitrite. An O2-binding site is contributed by H60. H89 lines the heme b pocket.

Belongs to the globin family. In terms of assembly, monomeric.

It localises to the cytoplasm. The protein localises to the sarcoplasm. The catalysed reaction is Fe(III)-heme b-[protein] + nitric oxide + H2O = Fe(II)-heme b-[protein] + nitrite + 2 H(+). It carries out the reaction H2O2 + AH2 = A + 2 H2O. Its function is as follows. Monomeric heme protein which primary function is to store oxygen and facilitate its diffusion within muscle tissues. Reversibly binds oxygen through a pentacoordinated heme iron and enables its timely and efficient release as needed during periods of heightened demand. Depending on the oxidative conditions of tissues and cells, and in addition to its ability to bind oxygen, it also has a nitrite reductase activity whereby it regulates the production of bioactive nitric oxide. Under stress conditions, like hypoxia and anoxia, it also protects cells against reactive oxygen species thanks to its pseudoperoxidase activity. The sequence is that of Myoglobin (mb) from Gobionotothen gibberifrons (Humped rockcod).